We begin with the raw amino-acid sequence, 136 residues long: Small ribosomal subunit protein uS19 (136 aa).

This sequence belongs to the universal ribosomal protein uS19 family.

Its function is as follows. Protein S19 forms a complex with S13 that binds strongly to the 16S ribosomal RNA. This Methanothrix thermoacetophila (strain DSM 6194 / JCM 14653 / NBRC 101360 / PT) (Methanosaeta thermophila) protein is Small ribosomal subunit protein uS19.